The chain runs to 172 residues: Type IV secretion system putative outer membrane lipoprotein BAB2_0057 (172 aa).

Positions 1-15 (MRTLVMVACAVSLAA) are cleaved as a signal peptide. Cys16 carries the N-palmitoyl cysteine lipid modification. Cys16 carries the S-diacylglycerol cysteine lipid modification. Positions 58-172 (WPARPPKQTV…RRVDIEILRK (115 aa)) constitute an OmpA-like domain.

Its subcellular location is the cell outer membrane. The virB operon is essential for intracellular survival and is not involved in the invasion process. Constitutes a major determinant of virulence in mice. This protein is essential for pathogenesis in mice but is not required for intracellular survival. The polypeptide is Type IV secretion system putative outer membrane lipoprotein BAB2_0057 (Brucella abortus (strain 2308)).